A 128-amino-acid chain; its full sequence is Translation initiation factor 5A (128 aa).

K35 carries the hypusine modification.

This sequence belongs to the eIF-5A family.

Its subcellular location is the cytoplasm. Functionally, functions by promoting the formation of the first peptide bond. In Methanosarcina acetivorans (strain ATCC 35395 / DSM 2834 / JCM 12185 / C2A), this protein is Translation initiation factor 5A (eif5a).